Consider the following 185-residue polypeptide: Ribosome-recycling factor (185 aa).

It belongs to the RRF family.

The protein resides in the cytoplasm. Responsible for the release of ribosomes from messenger RNA at the termination of protein biosynthesis. May increase the efficiency of translation by recycling ribosomes from one round of translation to another. In Frankia casuarinae (strain DSM 45818 / CECT 9043 / HFP020203 / CcI3), this protein is Ribosome-recycling factor.